The sequence spans 232 residues: uncharacterized protein (232 aa).

Residues 89 to 140 are a coiled coil; that stretch reads EFGTWQRRKNSLEDSLREVMKRRGELQDQLTAELGAIERMQTDLVGARQTLD.

This is an uncharacterized protein from Mycobacterium leprae (strain TN).